Here is a 420-residue protein sequence, read N- to C-terminus: Glucose-1-phosphate adenylyltransferase (420 aa).

Alpha-D-glucose 1-phosphate is bound by residues Tyr-107, Gly-172, 187–188 (EK), and Ser-205.

Belongs to the bacterial/plant glucose-1-phosphate adenylyltransferase family. In terms of assembly, homotetramer.

It catalyses the reaction alpha-D-glucose 1-phosphate + ATP + H(+) = ADP-alpha-D-glucose + diphosphate. It functions in the pathway glycan biosynthesis; glycogen biosynthesis. Involved in the biosynthesis of ADP-glucose, a building block required for the elongation reactions to produce glycogen. Catalyzes the reaction between ATP and alpha-D-glucose 1-phosphate (G1P) to produce pyrophosphate and ADP-Glc. In Rhodopseudomonas palustris (strain HaA2), this protein is Glucose-1-phosphate adenylyltransferase.